The following is a 230-amino-acid chain: MLSSYRHQKKYKKNKAREIGPQLPLWAWKETAFSINQEPYWYSTIRLQGLMWNKRGHKLMFVKENQGYEYWETSGKQWKMEIRRDLDLIAQINFRNAWQYKSQGEWKTIGVWYESPGDYKGKENQFWFHWRIALCSCNKTRWDIREFMIGKHRWDLCKSCIQGEIVKNTNPRSLQRLALLHLAKDHVFQVMPLWRARRVTVQKFPWCRSPMGYTIPWSLQECWEMESIFE.

The protein belongs to the ovine/caprine lentivirus group Vif protein family.

The protein resides in the host cytoplasm. The protein localises to the virion. The sequence is that of Virion infectivity factor (vif) from Ovis aries (Sheep).